The sequence spans 366 residues: Cobalt-precorrin-5B C(1)-methyltransferase (366 aa).

It belongs to the CbiD family.

It carries out the reaction Co-precorrin-5B + S-adenosyl-L-methionine = Co-precorrin-6A + S-adenosyl-L-homocysteine. The protein operates within cofactor biosynthesis; adenosylcobalamin biosynthesis; cob(II)yrinate a,c-diamide from sirohydrochlorin (anaerobic route): step 6/10. Catalyzes the methylation of C-1 in cobalt-precorrin-5B to form cobalt-precorrin-6A. The sequence is that of Cobalt-precorrin-5B C(1)-methyltransferase from Thermus thermophilus (strain ATCC BAA-163 / DSM 7039 / HB27).